We begin with the raw amino-acid sequence, 346 residues long: Histone PARylation factor 1 (346 aa).

Met1 carries the post-translational modification N-acetylmethionine. N6-acetyllysine is present on residues Lys19, Lys186, and Lys233. PolyADP-ribosyl aspartic acid is present on Asp235. At Tyr238 the chain carries ADP-ribosyltyrosine. Residue Glu240 is modified to PolyADP-ribosyl glutamic acid. Residues 242–346 (PETDADLKRI…SEENIDQLAG (105 aa)) are interaction with PARP1. The Proton donor role is filled by Glu284.

It belongs to the HPF1 family. As to quaternary structure, interacts with PARP1 (via the PARP catalytic domain). Interacts with PARP2 (via the PARP catalytic domain). Interacts with core nucleosomes in a PARP1- and PARP2-dependent manner.

It localises to the chromosome. It is found in the nucleus. Functionally, cofactor for serine ADP-ribosylation that confers serine specificity on PARP1 and PARP2 and plays a key role in DNA damage response. Initiates the repair of double-strand DNA breaks: recruited to DNA damage sites by PARP1 and PARP2 and switches the amino acid specificity of PARP1 and PARP2 from aspartate or glutamate to serine residues, licensing serine ADP-ribosylation of target proteins. Serine ADP-ribosylation of target proteins, such as histones, promotes decompaction of chromatin and the recruitment of repair factors leading to the reparation of DNA strand breaks. Serine ADP-ribosylation of proteins constitutes the primary form of ADP-ribosylation of proteins in response to DNA damage. HPF1 acts by completing the active site of PARP1 and PARP2: forms a composite active site composed of residues from HPF1 and PARP1 or PARP2. While HPF1 promotes the initiation of serine ADP-ribosylation, it restricts the polymerase activity of PARP1 and PARP2 in order to limit the length of poly-ADP-ribose chains. HPF1 also promotes tyrosine ADP-ribosylation, probably by conferring tyrosine specificity on PARP1. In Mus musculus (Mouse), this protein is Histone PARylation factor 1.